A 386-amino-acid chain; its full sequence is Patatin (386 aa).

A signal peptide spans 1 to 23 (MATTKSFLILFFMILATTSSTCA). The PNPLA domain maps to 32-229 (LSIDGGGIKG…TVGDPALLSL (198 aa)). Positions 36–41 (GGGIKG) match the GXGXXG motif. A GXSXG motif is present at residues 75-79 (GTSTG). The Nucleophile role is filled by serine 77. An N-linked (GlcNAc...) asparagine glycan is attached at asparagine 115. Aspartate 215 acts as the Proton acceptor in catalysis. Positions 215–217 (DGA) match the DGA/G motif.

Belongs to the patatin family.

Its subcellular location is the vacuole. In terms of biological role, probable lipolytic acyl hydrolase (LAH), an activity which is thought to be involved in the response of tubers to pathogens. This is Patatin from Solanum tuberosum (Potato).